The sequence spans 501 residues: Protein translocase subunit SecD (501 aa).

The next 6 helical transmembrane spans lie at 9 to 29, 339 to 359, 371 to 391, 394 to 414, 447 to 467, and 470 to 490; these read NLWL…YAVV, AIEQ…VVLI, ISIF…GATL, PGIA…VLIF, VTLL…VKGF, and TLAL…KVFL.

Belongs to the SecD/SecF family. SecD subfamily. Forms a complex with SecF. Part of the essential Sec protein translocation apparatus which comprises SecA, SecYEG and auxiliary proteins SecDF. Other proteins may also be involved.

The protein localises to the cell inner membrane. Functionally, part of the Sec protein translocase complex. Interacts with the SecYEG preprotein conducting channel. SecDF uses the proton motive force (PMF) to complete protein translocation after the ATP-dependent function of SecA. In Aquifex aeolicus (strain VF5), this protein is Protein translocase subunit SecD.